We begin with the raw amino-acid sequence, 787 residues long: Formate acetyltransferase (787 aa).

A PFL domain is found at 8 to 629 (NIFEQAWDGF…GNSPVHKGVF (622 aa)). The active-site S-acetylcysteine intermediate is cysteine 416. The active-site Cysteine radical intermediate is cysteine 417. A Glycine radical domain is found at 645-774 (SPGANPSNKA…LTERVFHEVL (130 aa)). The residue at position 749 (glycine 749) is a Glycine radical.

This sequence belongs to the glycyl radical enzyme (GRE) family. PFL subfamily. Homodimer.

The protein localises to the cytoplasm. It catalyses the reaction formate + acetyl-CoA = pyruvate + CoA. It functions in the pathway fermentation; pyruvate fermentation; formate from pyruvate: step 1/1. In Lactococcus lactis subsp. lactis (strain IL1403) (Streptococcus lactis), this protein is Formate acetyltransferase (pfl).